The following is a 158-amino-acid chain: Transcription factor BTF3 homolog 4 (158 aa).

Residues 33 to 98 form the NAC-A/B domain; it reads TADDKKLQSS…AEVKQITEML (66 aa). The segment at 123-158 is disordered; that stretch reads QVLDSKASKPEDIEEEDDDVPELVGNFDEASKNEAN. Acidic residues predominate over residues 134-143; it reads DIEEEDDDVP.

This sequence belongs to the NAC-beta family.

This Xenopus laevis (African clawed frog) protein is Transcription factor BTF3 homolog 4 (btf3l4).